Here is a 135-residue protein sequence, read N- to C-terminus: Interleukin-4 (135 aa).

The signal sequence occupies residues M1 to G24. Intrachain disulfides connect C48/C85 and C70/C105. N62 and N96 each carry an N-linked (GlcNAc...) asparagine glycan.

The protein belongs to the IL-4/IL-13 family.

Its subcellular location is the secreted. Functionally, participates in at least several B-cell activation processes as well as of other cell types. It is a costimulator of DNA-synthesis. It induces the expression of class II MHC molecules on resting B-cells. It enhances both secretion and cell surface expression of IgE and IgG1. It also regulates the expression of the low affinity Fc receptor for IgE (CD23) on both lymphocytes and monocytes. Positively regulates IL31RA expression in macrophages. Stimulates autophagy in dendritic cells by interfering with mTORC1 signaling and through the induction of RUFY4. This chain is Interleukin-4 (IL4), found in Ovis aries (Sheep).